The following is a 436-amino-acid chain: UDP-N-acetylglucosamine 1-carboxyvinyltransferase (436 aa).

22 to 23 provides a ligand contact to phosphoenolpyruvate; it reads KN. A UDP-N-acetyl-alpha-D-glucosamine-binding site is contributed by Arg96. Catalysis depends on Cys120, which acts as the Proton donor. A 2-(S-cysteinyl)pyruvic acid O-phosphothioketal modification is found at Cys120. Residues 125-129, Asp309, and Ile331 each bind UDP-N-acetyl-alpha-D-glucosamine; that span reads RPIDL.

This sequence belongs to the EPSP synthase family. MurA subfamily.

The protein resides in the cytoplasm. It carries out the reaction phosphoenolpyruvate + UDP-N-acetyl-alpha-D-glucosamine = UDP-N-acetyl-3-O-(1-carboxyvinyl)-alpha-D-glucosamine + phosphate. It functions in the pathway cell wall biogenesis; peptidoglycan biosynthesis. In terms of biological role, cell wall formation. Adds enolpyruvyl to UDP-N-acetylglucosamine. This chain is UDP-N-acetylglucosamine 1-carboxyvinyltransferase, found in Acidobacterium capsulatum (strain ATCC 51196 / DSM 11244 / BCRC 80197 / JCM 7670 / NBRC 15755 / NCIMB 13165 / 161).